Consider the following 143-residue polypeptide: Large ribosomal subunit protein uL15 (143 aa).

Composition is skewed to basic residues over residues 1–14 (MIRK…KRGS) and 23–38 (KKHR…GNAG). The disordered stretch occupies residues 1–38 (MIRKSKKITKKRGSRTCGYGEAKKHRGAGHRGGRGNAG).

This sequence belongs to the universal ribosomal protein uL15 family. Part of the 50S ribosomal subunit.

Its function is as follows. Binds to the 23S rRNA. The protein is Large ribosomal subunit protein uL15 of Methanococcus maripaludis (strain DSM 14266 / JCM 13030 / NBRC 101832 / S2 / LL).